The sequence spans 340 residues: Phosphate acyltransferase (340 aa).

Belongs to the PlsX family. In terms of assembly, homodimer. Probably interacts with PlsY.

It is found in the cytoplasm. It carries out the reaction a fatty acyl-[ACP] + phosphate = an acyl phosphate + holo-[ACP]. It participates in lipid metabolism; phospholipid metabolism. Its function is as follows. Catalyzes the reversible formation of acyl-phosphate (acyl-PO(4)) from acyl-[acyl-carrier-protein] (acyl-ACP). This enzyme utilizes acyl-ACP as fatty acyl donor, but not acyl-CoA. This Pseudomonas syringae pv. tomato (strain ATCC BAA-871 / DC3000) protein is Phosphate acyltransferase.